A 457-amino-acid polypeptide reads, in one-letter code: Dihydrolipoyl dehydrogenase (457 aa).

FAD-binding positions include 32 to 40 (EKEYFGGVC), K49, and A113. A disulfide bridge connects residues C40 and C45. NAD(+)-binding positions include 178 to 182 (GGGVI), V235, and 262 to 265 (SIGR). D303 and A311 together coordinate FAD. H437 acts as the Proton acceptor in catalysis.

Belongs to the class-I pyridine nucleotide-disulfide oxidoreductase family. In terms of assembly, homodimer. It depends on FAD as a cofactor.

It localises to the cytoplasm. The catalysed reaction is N(6)-[(R)-dihydrolipoyl]-L-lysyl-[protein] + NAD(+) = N(6)-[(R)-lipoyl]-L-lysyl-[protein] + NADH + H(+). Functionally, lipoamide dehydrogenase is a component of the alpha-ketoacid dehydrogenase complexes. This chain is Dihydrolipoyl dehydrogenase (pdhD), found in Mycoplasma pneumoniae (strain ATCC 29342 / M129 / Subtype 1) (Mycoplasmoides pneumoniae).